The primary structure comprises 254 residues: 5-oxoprolinase subunit A (254 aa).

Belongs to the LamB/PxpA family. Forms a complex composed of PxpA, PxpB and PxpC.

The enzyme catalyses 5-oxo-L-proline + ATP + 2 H2O = L-glutamate + ADP + phosphate + H(+). Functionally, catalyzes the cleavage of 5-oxoproline to form L-glutamate coupled to the hydrolysis of ATP to ADP and inorganic phosphate. The sequence is that of 5-oxoprolinase subunit A from Acinetobacter baumannii (strain ATCC 17978 / DSM 105126 / CIP 53.77 / LMG 1025 / NCDC KC755 / 5377).